The sequence spans 475 residues: UDP-N-acetylmuramate--L-alanine ligase (475 aa).

ATP is bound at residue 114–120; that stretch reads GTHGKTT.

This sequence belongs to the MurCDEF family.

It is found in the cytoplasm. It carries out the reaction UDP-N-acetyl-alpha-D-muramate + L-alanine + ATP = UDP-N-acetyl-alpha-D-muramoyl-L-alanine + ADP + phosphate + H(+). It participates in cell wall biogenesis; peptidoglycan biosynthesis. Its function is as follows. Cell wall formation. In Bartonella tribocorum (strain CIP 105476 / IBS 506), this protein is UDP-N-acetylmuramate--L-alanine ligase.